Here is an 83-residue protein sequence, read N- to C-terminus: MKTLLLTLVVVTIVCLDLGYTLKCHNTQLPFIYKTCPEGKNLCFKATLRKFPLKFPVKRGCADNCPKNSALLKYVCCSTDKCN.

Residues 1 to 21 (MKTLLLTLVVVTIVCLDLGYT) form the signal peptide. Disulfide bonds link Cys24-Cys43, Cys36-Cys61, Cys65-Cys76, and Cys77-Cys82.

It belongs to the three-finger toxin family. Short-chain subfamily. Orphan group XV sub-subfamily. In terms of tissue distribution, expressed by the venom gland.

It is found in the secreted. Its subcellular location is the target cell membrane. Has low cytotoxic activity. In Naja atra (Chinese cobra), this protein is Cytotoxin homolog 5V.